The sequence spans 145 residues: D-aminoacyl-tRNA deacylase (145 aa).

Positions 137–138 (GP) match the Gly-cisPro motif, important for rejection of L-amino acids motif.

This sequence belongs to the DTD family. As to quaternary structure, homodimer.

The protein resides in the cytoplasm. The catalysed reaction is glycyl-tRNA(Ala) + H2O = tRNA(Ala) + glycine + H(+). The enzyme catalyses a D-aminoacyl-tRNA + H2O = a tRNA + a D-alpha-amino acid + H(+). In terms of biological role, an aminoacyl-tRNA editing enzyme that deacylates mischarged D-aminoacyl-tRNAs. Also deacylates mischarged glycyl-tRNA(Ala), protecting cells against glycine mischarging by AlaRS. Acts via tRNA-based rather than protein-based catalysis; rejects L-amino acids rather than detecting D-amino acids in the active site. By recycling D-aminoacyl-tRNA to D-amino acids and free tRNA molecules, this enzyme counteracts the toxicity associated with the formation of D-aminoacyl-tRNA entities in vivo and helps enforce protein L-homochirality. This chain is D-aminoacyl-tRNA deacylase, found in Salmonella arizonae (strain ATCC BAA-731 / CDC346-86 / RSK2980).